A 957-amino-acid polypeptide reads, in one-letter code: Melanoma-associated antigen E1 (957 aa).

The tract at residues 1-433 (MSLVSQNSRR…RNPSKCSIVL (433 aa)) is disordered. Composition is skewed to polar residues over residues 85 to 96 (SEASSASGQPTV) and 104 to 130 (LLAT…SVTL). Residues 138–156 (TSRPPTSSEEPSTSVPATP) show a composition bias toward low complexity. Composition is skewed to polar residues over residues 158-177 (EGTS…TSVV), 220-232 (LSTS…TEGL), 256-306 (RSTT…GPST), 328-344 (LSTS…STSV), 364-380 (RSTS…DTSV), and 414-428 (TLFS…NPSK). MAGE domains lie at 491-690 (MEQN…YNEA) and 745-936 (LESK…YREA). The tract at residues 743–957 (SRLESKARKL…HRQFFVHNFR (215 aa)) is interaction with DTNA.

As to quaternary structure, interacts with DTNA. Interacts with TRIM28.

Its subcellular location is the cytoplasm. It is found in the perinuclear region. The protein resides in the nucleus. It localises to the cell membrane. Its function is as follows. May enhance ubiquitin ligase activity of RING-type zinc finger-containing E3 ubiquitin-protein ligases. Proposed to act through recruitment and/or stabilization of the Ubl-conjugating enzyme (E2) at the E3:substrate complex. The polypeptide is Melanoma-associated antigen E1 (MAGEE1) (Macaca fascicularis (Crab-eating macaque)).